A 372-amino-acid polypeptide reads, in one-letter code: Glutamate 5-kinase (372 aa).

Lys14 serves as a coordination point for ATP. Substrate contacts are provided by Ser54, Asp141, and Asn153. 173 to 174 is an ATP binding site; the sequence is TD. The PUA domain maps to 280 to 358; sequence RGHVVIDAGA…GEIETVLGYM (79 aa).

The protein belongs to the glutamate 5-kinase family.

The protein localises to the cytoplasm. The catalysed reaction is L-glutamate + ATP = L-glutamyl 5-phosphate + ADP. It functions in the pathway amino-acid biosynthesis; L-proline biosynthesis; L-glutamate 5-semialdehyde from L-glutamate: step 1/2. In terms of biological role, catalyzes the transfer of a phosphate group to glutamate to form L-glutamate 5-phosphate. In Burkholderia orbicola (strain AU 1054), this protein is Glutamate 5-kinase.